Consider the following 229-residue polypeptide: Enolase-phosphatase E1 (229 aa).

Residues 206–229 (DRDPASHHPQVQRFDDIHPEQIPA) are disordered. The span at 218–229 (RFDDIHPEQIPA) shows a compositional bias: basic and acidic residues.

This sequence belongs to the HAD-like hydrolase superfamily. MasA/MtnC family. As to quaternary structure, monomer. Mg(2+) is required as a cofactor.

It catalyses the reaction 5-methylsulfanyl-2,3-dioxopentyl phosphate + H2O = 1,2-dihydroxy-5-(methylsulfanyl)pent-1-en-3-one + phosphate. It participates in amino-acid biosynthesis; L-methionine biosynthesis via salvage pathway; L-methionine from S-methyl-5-thio-alpha-D-ribose 1-phosphate: step 3/6. It functions in the pathway amino-acid biosynthesis; L-methionine biosynthesis via salvage pathway; L-methionine from S-methyl-5-thio-alpha-D-ribose 1-phosphate: step 4/6. Functionally, bifunctional enzyme that catalyzes the enolization of 2,3-diketo-5-methylthiopentyl-1-phosphate (DK-MTP-1-P) into the intermediate 2-hydroxy-3-keto-5-methylthiopentenyl-1-phosphate (HK-MTPenyl-1-P), which is then dephosphorylated to form the acireductone 1,2-dihydroxy-3-keto-5-methylthiopentene (DHK-MTPene). This Klebsiella oxytoca protein is Enolase-phosphatase E1.